We begin with the raw amino-acid sequence, 135 residues long: ATP synthase epsilon chain (135 aa).

Residues 89–100 show a composition bias toward basic and acidic residues; that stretch reads SGKAEAELEKAK. Residues 89-114 are disordered; the sequence is SGKAEAELEKAKNQLSQNKDQGNSPE. Residues 101-112 show a composition bias toward polar residues; that stretch reads NQLSQNKDQGNS.

Belongs to the ATPase epsilon chain family. F-type ATPases have 2 components, CF(1) - the catalytic core - and CF(0) - the membrane proton channel. CF(1) has five subunits: alpha(3), beta(3), gamma(1), delta(1), epsilon(1). CF(0) has three main subunits: a, b and c.

The protein localises to the cellular thylakoid membrane. Its function is as follows. Produces ATP from ADP in the presence of a proton gradient across the membrane. This is ATP synthase epsilon chain from Prochlorococcus marinus (strain NATL2A).